Here is a 365-residue protein sequence, read N- to C-terminus: Histidinol-phosphate aminotransferase (365 aa).

Lys-223 carries the N6-(pyridoxal phosphate)lysine modification.

It belongs to the class-II pyridoxal-phosphate-dependent aminotransferase family. Histidinol-phosphate aminotransferase subfamily. In terms of assembly, homodimer. Pyridoxal 5'-phosphate is required as a cofactor.

It catalyses the reaction L-histidinol phosphate + 2-oxoglutarate = 3-(imidazol-4-yl)-2-oxopropyl phosphate + L-glutamate. It functions in the pathway amino-acid biosynthesis; L-histidine biosynthesis; L-histidine from 5-phospho-alpha-D-ribose 1-diphosphate: step 7/9. The sequence is that of Histidinol-phosphate aminotransferase from Brucella abortus (strain 2308).